The sequence spans 187 residues: UPF0232 protein JTY_0004 (187 aa).

2 stretches are compositionally biased toward basic and acidic residues: residues Met-1–Met-17 and Leu-24–Arg-45. Disordered stretches follow at residues Met-1–Pro-75 and Pro-168–Gly-187.

This sequence belongs to the UPF0232 family.

The polypeptide is UPF0232 protein JTY_0004 (Mycobacterium bovis (strain BCG / Tokyo 172 / ATCC 35737 / TMC 1019)).